The following is a 146-amino-acid chain: Meiotically up-regulated gene 96 protein (146 aa).

A helical transmembrane segment spans residues 85–104; it reads LIRYSLILTCLVAILLSVLW.

It is found in the cytoplasm. The protein localises to the membrane. In terms of biological role, has a role in meiosis. The polypeptide is Meiotically up-regulated gene 96 protein (mug96) (Schizosaccharomyces pombe (strain 972 / ATCC 24843) (Fission yeast)).